Consider the following 241-residue polypeptide: Triosephosphate isomerase (241 aa).

9–11 (NWK) lines the substrate pocket. The Electrophile role is filled by histidine 96. Catalysis depends on glutamate 165, which acts as the Proton acceptor. Residues glycine 171, serine 204, and 225-226 (GG) contribute to the substrate site.

The protein belongs to the triosephosphate isomerase family. Homodimer.

It is found in the cytoplasm. It carries out the reaction D-glyceraldehyde 3-phosphate = dihydroxyacetone phosphate. It functions in the pathway carbohydrate biosynthesis; gluconeogenesis. It participates in carbohydrate degradation; glycolysis; D-glyceraldehyde 3-phosphate from glycerone phosphate: step 1/1. Involved in the gluconeogenesis. Catalyzes stereospecifically the conversion of dihydroxyacetone phosphate (DHAP) to D-glyceraldehyde-3-phosphate (G3P). The protein is Triosephosphate isomerase of Gloeothece citriformis (strain PCC 7424) (Cyanothece sp. (strain PCC 7424)).